The chain runs to 345 residues: Anthranilate phosphoribosyltransferase (345 aa).

Residues Gly-79, 82–83 (GD), Thr-87, 89–92 (NVST), 106–114 (KHGNRAVSG), and Ser-118 each bind 5-phospho-alpha-D-ribose 1-diphosphate. Anthranilate is bound at residue Gly-79. Ser-91 provides a ligand contact to Mg(2+). Asn-109 serves as a coordination point for anthranilate. An anthranilate-binding site is contributed by Arg-164. Mg(2+) contacts are provided by Asp-223 and Glu-224.

It belongs to the anthranilate phosphoribosyltransferase family. Homodimer. Mg(2+) serves as cofactor.

The enzyme catalyses N-(5-phospho-beta-D-ribosyl)anthranilate + diphosphate = 5-phospho-alpha-D-ribose 1-diphosphate + anthranilate. The protein operates within amino-acid biosynthesis; L-tryptophan biosynthesis; L-tryptophan from chorismate: step 2/5. Catalyzes the transfer of the phosphoribosyl group of 5-phosphorylribose-1-pyrophosphate (PRPP) to anthranilate to yield N-(5'-phosphoribosyl)-anthranilate (PRA). This Saccharolobus islandicus (strain L.S.2.15 / Lassen #1) (Sulfolobus islandicus) protein is Anthranilate phosphoribosyltransferase.